Consider the following 141-residue polypeptide: Hydroperoxide reductase (141 aa).

The protein belongs to the OsmC/Ohr family. In terms of assembly, homodimer.

The protein resides in the cytoplasm. In terms of biological role, reduces organic and inorganic peroxide substrates. Protects the cell against oxidative stress. This Mycoplasma pneumoniae (strain ATCC 29342 / M129 / Subtype 1) (Mycoplasmoides pneumoniae) protein is Hydroperoxide reductase.